Reading from the N-terminus, the 65-residue chain is Alpha-insect toxin BotIT1 (65 aa).

Residues 2-64 enclose the LCN-type CS-alpha/beta domain; that stretch reads RDAYIAQNYN…VPIRIPGKCH (63 aa). Intrachain disulfides connect Cys-12-Cys-63, Cys-16-Cys-36, Cys-22-Cys-46, and Cys-26-Cys-48.

This sequence belongs to the long (4 C-C) scorpion toxin superfamily. Sodium channel inhibitor family. Alpha subfamily. In terms of tissue distribution, expressed by the venom gland.

It localises to the secreted. Its function is as follows. Alpha toxins bind voltage-independently at site-3 of sodium channels (Nav) and inhibit the inactivation of the activated channels, thereby blocking neuronal transmission. This contractive toxin is highly toxic to insects and barely toxic to mammals. The protein is Alpha-insect toxin BotIT1 of Buthus occitanus tunetanus (Common European scorpion).